A 333-amino-acid polypeptide reads, in one-letter code: MRRVTLTQFLIEQQRAGRTSPDLRLLIEVVARAVKAIAVNVSKGALADLLGEAGTDNVQGEAQKKLDVIANEILLQANEWGGHLAAMASEEVEEVHQIPFDYPKGGYLLLFDPLDGSSNIDVNISVGTIFSVLRFPEGIQEPNEQCFLQPGREQVAAGYALYGPSTLLILTVGNGVHGFTLDREMGSFVYTHPFMTVPVDTQEYAINASNARHWEPPVQRYVAELQQGRTGPRGKDFNMRWVASMVADVHRVLTRGGIFMYPLDEKCRDQGGKLRLMYEANPMAMIVEQAGGSATTGRQRILDVQPAKLHQRVPVILGSTHEVERVTAYHREG.

Mg(2+) contacts are provided by E90, D112, L114, and D115. Residues D115 to S118, N207, and K273 contribute to the substrate site. Residue E279 participates in Mg(2+) binding.

It belongs to the FBPase class 1 family. In terms of assembly, homotetramer. Requires Mg(2+) as cofactor.

The protein resides in the cytoplasm. The enzyme catalyses beta-D-fructose 1,6-bisphosphate + H2O = beta-D-fructose 6-phosphate + phosphate. The protein operates within carbohydrate biosynthesis; gluconeogenesis. In Aromatoleum aromaticum (strain DSM 19018 / LMG 30748 / EbN1) (Azoarcus sp. (strain EbN1)), this protein is Fructose-1,6-bisphosphatase class 1.